Reading from the N-terminus, the 511-residue chain is Probable G-protein coupled receptor 101 (511 aa).

The Extracellular segment spans residues Met-1–Ser-35. N-linked (GlcNAc...) asparagine glycosylation is found at Asn-7 and Asn-13. A helical transmembrane segment spans residues Val-36 to Leu-56. Topologically, residues His-57–Asn-67 are cytoplasmic. The helical transmembrane segment at Arg-68 to Ser-90 threads the bilayer. Topologically, residues Thr-91–Ala-106 are extracellular. An intrachain disulfide couples Cys-104 to Cys-182. The helical transmembrane segment at Leu-107–Val-127 threads the bilayer. Residues Asp-128–Tyr-149 lie on the Cytoplasmic side of the membrane. The helical transmembrane segment at Ile-150–Trp-170 threads the bilayer. The Extracellular portion of the chain corresponds to Gly-171 to Ser-196. Residues Val-197–Gly-217 form a helical membrane-spanning segment. The Cytoplasmic segment spans residues Ala-218–Arg-398. The span at Asp-240–Glu-261 shows a compositional bias: basic and acidic residues. Disordered stretches follow at residues Asp-240 to Asn-315 and Glu-367 to Pro-386. Residues Pro-376–Asp-385 show a composition bias toward polar residues. A helical transmembrane segment spans residues Val-399–Val-419. Residues Leu-420–Gln-432 are Extracellular-facing. The helical transmembrane segment at Trp-433–Tyr-453 threads the bilayer. Residues Gly-454 to Pro-511 lie on the Cytoplasmic side of the membrane. The segment at Ser-476–Pro-511 is disordered. The span at Pro-477 to Glu-490 shows a compositional bias: basic and acidic residues.

This sequence belongs to the G-protein coupled receptor 1 family. As to expression, expressed in the brain in hypothalamus.

The protein resides in the cell membrane. Functionally, orphan receptor. The sequence is that of Probable G-protein coupled receptor 101 (Gpr101) from Mus musculus (Mouse).